A 56-amino-acid polypeptide reads, in one-letter code: Small ribosomal subunit protein uS14 (56 aa).

Zn(2+)-binding residues include Cys-21, Cys-24, Cys-39, and Cys-42.

Belongs to the universal ribosomal protein uS14 family. Component of the 40S small ribosomal subunit. Zn(2+) serves as cofactor.

Its subcellular location is the cytoplasm. It localises to the cytosol. The protein resides in the rough endoplasmic reticulum. In Ixodes scapularis (Black-legged tick), this protein is Small ribosomal subunit protein uS14 (RpS29).